Here is a 397-residue protein sequence, read N- to C-terminus: Acetyl-CoA acetyltransferase (397 aa).

Catalysis depends on C95, which acts as the Acyl-thioester intermediate. The CoA site is built by Y187 and K230. Residue Y187 participates in K(+) binding. K(+) is bound by residues A246, G247, and A249. CoA is bound at residue S250. Residue V347 participates in K(+) binding. Catalysis depends on proton acceptor residues H351 and C379.

Belongs to the thiolase-like superfamily. Thiolase family.

Its subcellular location is the peroxisome. It carries out the reaction 2 acetyl-CoA = acetoacetyl-CoA + CoA. Its function is as follows. Essential for n-decane utilization. This chain is Acetyl-CoA acetyltransferase (PAT1), found in Yarrowia lipolytica (strain CLIB 122 / E 150) (Yeast).